A 141-amino-acid polypeptide reads, in one-letter code: ATP synthase epsilon chain (141 aa).

Belongs to the ATPase epsilon chain family. In terms of assembly, F-type ATPases have 2 components, CF(1) - the catalytic core - and CF(0) - the membrane proton channel. CF(1) has five subunits: alpha(3), beta(3), gamma(1), delta(1), epsilon(1). CF(0) has three main subunits: a, b and c.

The protein resides in the cell membrane. Produces ATP from ADP in the presence of a proton gradient across the membrane. This chain is ATP synthase epsilon chain, found in Mycoplasma mobile (strain ATCC 43663 / 163K / NCTC 11711) (Mesomycoplasma mobile).